The primary structure comprises 266 residues: MAVGKNKRLTKGGKKGAKKKIVDPFSKKDWYDVKAPAMFNIRNIGKTLVSRTQGTRIASDGLKGRVFEVSLADLQNDEVAFRKFKLISEDVQGKNCLTNFHGMDLTRDKMCSMVKKWQTMIEAHVDVKTTDGYLLRLFCVGFTKKRTNQIRKTSYAQHQQVRQIRKKMMEIMTREVQTNDLKEVVNKLIPDSVGKDIEKACQSIYPLHDVYVRKVKMLKKPKFELGKLMELHGEGGGSSAAKPSGDDTGAKVDRADGYEPPIQETV.

The segment at 233-266 (GEGGGSSAAKPSGDDTGAKVDRADGYEPPIQETV) is disordered. Over residues 244 to 257 (SGDDTGAKVDRADG) the composition is skewed to basic and acidic residues.

This sequence belongs to the eukaryotic ribosomal protein eS1 family. In terms of assembly, component of the small ribosomal subunit. Mature ribosomes consist of a small (40S) and a large (60S) subunit. The 40S subunit contains about 33 different proteins and 1 molecule of RNA (18S). The 60S subunit contains about 49 different proteins and 3 molecules of RNA (28S, 5.8S and 5S). Part of the small subunit (SSU) processome, composed of more than 70 proteins and the RNA chaperone small nucleolar RNA (snoRNA) U3.

The protein resides in the cytoplasm. It localises to the nucleus. Its subcellular location is the nucleolus. Its function is as follows. Component of the small ribosomal subunit. The ribosome is a large ribonucleoprotein complex responsible for the synthesis of proteins in the cell. Part of the small subunit (SSU) processome, first precursor of the small eukaryotic ribosomal subunit. During the assembly of the SSU processome in the nucleolus, many ribosome biogenesis factors, an RNA chaperone and ribosomal proteins associate with the nascent pre-rRNA and work in concert to generate RNA folding, modifications, rearrangements and cleavage as well as targeted degradation of pre-ribosomal RNA by the RNA exosome. May play a role during erythropoiesis. This chain is Small ribosomal subunit protein eS1 (rps3a), found in Salmo salar (Atlantic salmon).